The chain runs to 283 residues: Cyclin-C (283 aa).

A Cyclin N-terminal domain is found at 46–144 (NVIQALGEHL…ILECEFYLLE (99 aa)). Residues 252–283 (TILSKMPKPKPPPNSEGEQGPNGSQNSSYSQS) form a disordered region. Over residues 272–283 (PNGSQNSSYSQS) the composition is skewed to polar residues.

The protein belongs to the cyclin family. Cyclin C subfamily. In terms of assembly, component of the Mediator complex. The cylin/CDK pair formed by CCNC/CDK8 also associates with the large subunit of RNA polymerase II.

The protein localises to the nucleus. In terms of biological role, component of the Mediator complex, a coactivator involved in regulated gene transcription of nearly all RNA polymerase II-dependent genes. Mediator functions as a bridge to convey information from gene-specific regulatory proteins to the basal RNA polymerase II transcription machinery. Mediator is recruited to promoters by direct interactions with regulatory proteins and serves as a scaffold for the assembly of a functional preinitiation complex with RNA polymerase II and the general transcription factors. Binds to and activates cyclin-dependent kinase CDK8 that phosphorylates the CTD (C-terminal domain) of the large subunit of RNA polymerase II (RNAp II), which may inhibit the formation of a transcription initiation complex. The protein is Cyclin-C (CCNC) of Gallus gallus (Chicken).